We begin with the raw amino-acid sequence, 498 residues long: ATP synthase subunit beta, chloroplastic (498 aa).

Residue 172–179 coordinates ATP; the sequence is GGAGVGKT.

Belongs to the ATPase alpha/beta chains family. In terms of assembly, F-type ATPases have 2 components, CF(1) - the catalytic core - and CF(0) - the membrane proton channel. CF(1) has five subunits: alpha(3), beta(3), gamma(1), delta(1), epsilon(1). CF(0) has four main subunits: a(1), b(1), b'(1) and c(9-12).

Its subcellular location is the plastid. The protein localises to the chloroplast thylakoid membrane. It carries out the reaction ATP + H2O + 4 H(+)(in) = ADP + phosphate + 5 H(+)(out). Its function is as follows. Produces ATP from ADP in the presence of a proton gradient across the membrane. The catalytic sites are hosted primarily by the beta subunits. In Lactuca sativa (Garden lettuce), this protein is ATP synthase subunit beta, chloroplastic.